A 960-amino-acid polypeptide reads, in one-letter code: Pentatricopeptide repeat-containing protein At3g63370, chloroplastic (960 aa).

The N-terminal 64 residues, 1–64 (MEYAVTNMRL…PKLACFDGVL (64 aa)), are a transit peptide targeting the chloroplast. 20 PPR repeats span residues 79-109 (PVEAFAYVLELCGKRRAVSQGRQLHSRIFKT), 115-145 (LDFLAGKLVFMYGKCGSLDDAEKVFDEMPDR), 146-180 (TAFAWNTMIGAYVSNGEPASALALYWNMRVEGVPL), 181-215 (GLSSFPALLKACAKLRDIRSGSELHSLLVKLGYHS), 216-246 (TGFIVNALVSMYAKNDDLSAARRLFDGFQEK), 248-282 (DAVLWNSILSSYSTSGKSLETLELFREMHMTGPAP), 283-317 (NSYTIVSALTACDGFSYAKLGKEIHASVLKSSTHS), 319-349 (ELYVCNALIAMYTRCGKMPQAERILRQMNNA), 350-384 (DVVTWNSLIKGYVQNLMYKEALEFFSDMIAAGHKS), 385-419 (DEVSMTSIIAASGRLSNLLAGMELHAYVIKHGWDS), 420-450 (NLQVGNTLIDMYSKCNLTCYMGRAFLRMHDK), 451-485 (DLISWTTVIAGYAQNDCHVEALELFRDVAKKRMEI), 486-516 (DEMILGSILRASSVLKSMLIVKEIHCHILRK), 520-550 (DTVIQNELVDVYGKCRNMGYATRVFESIKGK), 551-585 (DVVSWTSMISSSALNGNESEAVELFRRMVETGLSA), 586-620 (DSVALLCILSAAASLSALNKGREIHCYLLRKGFCL), 621-651 (EGSIAVAVVDMYACCGDLQSAKAVFDRIERK), 652-686 (GLLQYTSMINAYGMHGCGKAAVELFDKMRHENVSP), 687-717 (DHISFLALLYACSHAGLLDEGRGFLKIMEHE), and 723-753 (WPEHYVCLVDMLGRANCVVEAFEFVKMMKTE). The tract at residues 758 to 833 (VWCALLAACR…HPGCSWIEMD (76 aa)) is type E motif. Residues 834 to 864 (GKVHKFTARDKSHPESKEIYEKLSEVTRKLE) form a type E(+) motif region. The interval 865 to 960 (REVGYVADTK…SGLCSCGDSW (96 aa)) is type DYW motif.

It belongs to the PPR family. PCMP-H subfamily.

The protein resides in the plastid. Its subcellular location is the chloroplast. Functionally, involved in RNA editing event in chloroplasts. Required for the editing of a single site in rps14 transcript. This is Pentatricopeptide repeat-containing protein At3g63370, chloroplastic (PCMP-H83) from Arabidopsis thaliana (Mouse-ear cress).